The chain runs to 620 residues: Chaperone protein HscA homolog (620 aa).

This sequence belongs to the heat shock protein 70 family.

Functionally, chaperone involved in the maturation of iron-sulfur cluster-containing proteins. Has a low intrinsic ATPase activity which is markedly stimulated by HscB. The chain is Chaperone protein HscA homolog from Pseudomonas fluorescens (strain SBW25).